The following is a 161-amino-acid chain: MAAKAFFDIKAGDERLGRIIFELFNDVPDTTRNFRELCTHKNNFGYKGSVFHRIIPGFMCQGGDFTNGDGTGGKSIYGNKFKDENFNHKHEAFSLSMANAGPNTNGSQFFITTVPCSWLDGKHVVFGKVVSGIDVVKKMESLGSTSGKPSKKIIIEDCGEC.

Residues 6 to 160 (FFDIKAGDER…KKIIIEDCGE (155 aa)) enclose the PPIase cyclophilin-type domain.

This sequence belongs to the cyclophilin-type PPIase family. PPIase A subfamily. As to expression, found mainly in the tegument, gut epithelium, and muscle layers. Also found in the interior of the parasite.

It carries out the reaction [protein]-peptidylproline (omega=180) = [protein]-peptidylproline (omega=0). With respect to regulation, binds cyclosporin A (CsA). CsA mediates some of its effects via an inhibitory action on PPIase. PPIases accelerate the folding of proteins. It catalyzes the cis-trans isomerization of proline imidic peptide bonds in oligopeptides. This chain is Peptidyl-prolyl cis-trans isomerase, found in Schistosoma mansoni (Blood fluke).